We begin with the raw amino-acid sequence, 264 residues long: MSAEKGELDLNGAKQNTGMWLVKLPKYLAQQWAKATGRGEVGKLRIVKNQGKTEVSFTLNEELASIQDIGGKPASSLVSTPREHPFLLQSVGGQTLTVLTESLSGQSEDKSENRVIDKLALEGIVVHRAECRPAASDNYMQMKRKQIEESSKPKRQSQQLEKAVTSNYKPVSNHQYNIEYEKKKKDDGKRARVDKHQVLDMLFSAFEKHQYYNIKDLVDITKQPVTYLKEILRDIGIYNMKGTHKNTWELKPEYRHYQGEDKSD.

The protein belongs to the TFIIF beta subunit family. Heterodimer of an alpha and a beta subunit.

Its subcellular location is the nucleus. TFIIF is a general transcription initiation factor that binds to RNA polymerase II and helps to recruit it to the initiation complex in collaboration with TFIIB. The sequence is that of General transcription factor IIF subunit 2 (gtf2f2) from Xenopus laevis (African clawed frog).